Consider the following 469-residue polypeptide: Argininosuccinate lyase (469 aa).

The protein belongs to the lyase 1 family. Argininosuccinate lyase subfamily.

It is found in the cytoplasm. The enzyme catalyses 2-(N(omega)-L-arginino)succinate = fumarate + L-arginine. It participates in amino-acid biosynthesis; L-arginine biosynthesis; L-arginine from L-ornithine and carbamoyl phosphate: step 3/3. This Burkholderia multivorans (strain ATCC 17616 / 249) protein is Argininosuccinate lyase.